The primary structure comprises 101 residues: Urease subunit beta (101 aa).

This sequence belongs to the urease beta subunit family. As to quaternary structure, heterotrimer of UreA (gamma), UreB (beta) and UreC (alpha) subunits. Three heterotrimers associate to form the active enzyme.

Its subcellular location is the cytoplasm. It carries out the reaction urea + 2 H2O + H(+) = hydrogencarbonate + 2 NH4(+). Its pathway is nitrogen metabolism; urea degradation; CO(2) and NH(3) from urea (urease route): step 1/1. The polypeptide is Urease subunit beta (Cupriavidus metallidurans (strain ATCC 43123 / DSM 2839 / NBRC 102507 / CH34) (Ralstonia metallidurans)).